The following is a 171-amino-acid chain: MEEYAREPCPWRIVDDCGGAFTMGTIGGGIFQAIKGFRNSPVGVNHRLRGSLTAIKTRAPQLGGSFAVWGGLFSMIDCSMVQVRGKEDPWNSITSGALTGAILAARNGPVAMVGSAAMGGILLALIEGAGILLTRFASAQFPNGPQFAEDPSQLPSTQLPSSPFGDYRQYQ.

A disulfide bridge connects residues Cys9 and Cys78. 3 consecutive transmembrane segments (helical) span residues 17–37 (CGGA…IKGF), 63–77 (GGSF…SMID), and 113–133 (VGSA…GILL). Positions 144–171 (GPQFAEDPSQLPSTQLPSSPFGDYRQYQ) are disordered. The span at 151–163 (PSQLPSTQLPSSP) shows a compositional bias: low complexity.

Belongs to the Tim17/Tim22/Tim23 family. Component of the TIM23 complex at least composed of TIMM23, TIMM17 (TIMM17A or TIMM17B) and TIMM50. The complex interacts with the TIMM44 component of the PAM complex and with DNAJC15. Post-translationally, degraded by YMEL1 downstream of the integrated stress response (ISR).

It is found in the mitochondrion inner membrane. Essential component of the TIM23 complex, a complex that mediates the translocation of transit peptide-containing proteins across the mitochondrial inner membrane. The chain is Mitochondrial import inner membrane translocase subunit Tim17-A (TIMM17A) from Homo sapiens (Human).